The primary structure comprises 69 residues: Conotoxin Cal12.1p4 (69 aa).

The propeptide occupies 1 to 23 (DLITNSYTRGKPRHVTSWRNLKT).

Contains 4 disulfide bonds. In terms of tissue distribution, expressed by the venom duct.

The protein resides in the secreted. This chain is Conotoxin Cal12.1p4, found in Californiconus californicus (California cone).